The sequence spans 360 residues: Phosphoserine aminotransferase (360 aa).

Arginine 41 is an L-glutamate binding site. Residues 75–76 (GR), tryptophan 101, threonine 152, aspartate 172, and glutamine 195 each bind pyridoxal 5'-phosphate. Lysine 196 bears the N6-(pyridoxal phosphate)lysine mark. 237-238 (NT) contributes to the pyridoxal 5'-phosphate binding site.

It belongs to the class-V pyridoxal-phosphate-dependent aminotransferase family. SerC subfamily. Homodimer. Requires pyridoxal 5'-phosphate as cofactor.

The protein resides in the cytoplasm. It carries out the reaction O-phospho-L-serine + 2-oxoglutarate = 3-phosphooxypyruvate + L-glutamate. It catalyses the reaction 4-(phosphooxy)-L-threonine + 2-oxoglutarate = (R)-3-hydroxy-2-oxo-4-phosphooxybutanoate + L-glutamate. It functions in the pathway amino-acid biosynthesis; L-serine biosynthesis; L-serine from 3-phospho-D-glycerate: step 2/3. The protein operates within cofactor biosynthesis; pyridoxine 5'-phosphate biosynthesis; pyridoxine 5'-phosphate from D-erythrose 4-phosphate: step 3/5. Catalyzes the reversible conversion of 3-phosphohydroxypyruvate to phosphoserine and of 3-hydroxy-2-oxo-4-phosphonooxybutanoate to phosphohydroxythreonine. In Pseudoalteromonas translucida (strain TAC 125), this protein is Phosphoserine aminotransferase.